A 287-amino-acid chain; its full sequence is Oxaloacetate decarboxylase (287 aa).

Serine 50 lines the substrate pocket. Aspartate 88 contributes to the Mg(2+) binding site. 2 residues coordinate substrate: arginine 159 and histidine 235.

It belongs to the isocitrate lyase family. Oxaloacetate decarboxylase subfamily. In terms of assembly, homotetramer; dimer of dimers. Mg(2+) serves as cofactor.

It catalyses the reaction oxaloacetate + H(+) = pyruvate + CO2. Catalyzes the decarboxylation of oxaloacetate into pyruvate. Seems to play a role in maintaining cellular concentrations of bicarbonate and pyruvate. This is Oxaloacetate decarboxylase from Pseudomonas aeruginosa (strain LESB58).